We begin with the raw amino-acid sequence, 294 residues long: Serine/threonine-protein kinase Aurora-1 (294 aa).

Residues 31-282 (FDIGKPLGRG…LHKLLEHPWI (252 aa)) enclose the Protein kinase domain. Residues 37–45 (LGRGKFGHV) and Lys-60 contribute to the ATP site. The Proton acceptor role is filled by Asp-154. The residue at position 176 (Ser-176) is a Phosphoserine. Residue Thr-185 is modified to Phosphothreonine.

It belongs to the protein kinase superfamily. Ser/Thr protein kinase family. Aurora subfamily. In terms of assembly, interacts with TPX2. In terms of processing, phosphorylation at Thr-185 may regulate activity and degradation of AUR1 in a cell cycle dependent manner. As to expression, abundant in roots, flowers and flower buds, low or absent in expanded leaves, stems and siliques.

The protein resides in the nucleus membrane. It is found in the cytoplasm. The protein localises to the cytoskeleton. Its subcellular location is the spindle. It localises to the spindle pole. The protein resides in the phragmoplast. The enzyme catalyses L-seryl-[protein] + ATP = O-phospho-L-seryl-[protein] + ADP + H(+). The catalysed reaction is L-threonyl-[protein] + ATP = O-phospho-L-threonyl-[protein] + ADP + H(+). Its function is as follows. Phosphorylates specifically 'Ser-10' of histone H3 in vitro and colocalizes with phosphorylated histone H3 during mitosis. Associates with cytoskeletal structures that are necessary for cytokinesis and with the microtubule spindle. Also colocalizes with gamma-tubulin and function in microtubule organizing centers (MTOCs). In contrast with the mammalian B-type Aurora, AUR1 has no kinase activity toward 'Ser-28' of histone H3. This chain is Serine/threonine-protein kinase Aurora-1 (AUR1), found in Arabidopsis thaliana (Mouse-ear cress).